A 409-amino-acid chain; its full sequence is LIM/homeobox protein ttx-3 (409 aa).

2 LIM zinc-binding domains span residues 108-169 (NQCC…RYQK) and 171-232 (CRKC…VRST). 2 disordered regions span residues 245–299 (AVVA…RTSF) and 372–409 (MNPPLSSSSSGHSTDGYQLNTPPLSSEIYSPNSNYTHL). Residues 247 to 267 (VAPPPPPPTTTTAPPPAAPEQ) show a composition bias toward pro residues. Residues 292-351 (SKRMRTSFKHHQLRAMKTYFALNHNPDAKDLKQLAAKTNLTKRVLQVWFQNARAKYRREL) constitute a DNA-binding region (homeobox). The segment covering 382–409 (GHSTDGYQLNTPPLSSEIYSPNSNYTHL) has biased composition (polar residues).

Expressed in the AIA, AIN and AIY interneurons, and in the NSM neurons. Expressed also in ADL and ASI sensory neurons in 60-70% of L2 larvae. Expression is also detected in head muscles of embryos and some early larvae but not late larvae or adults.

Its subcellular location is the nucleus. It is found in the perikaryon. The protein resides in the cell projection. It localises to the axon. In terms of biological role, transcription factor. Binds to a sequence motif, 5'-TTATTGGCTTCGTTAA-3', which may be involved in AIY interneuron function, in the regulatory elements of target genes; binding is more efficient, in vitro, together with homeobox protein ceh-10. Required for specification of the AIA and AIY interneurons and the NSM neurons. Positively regulates the expression of a number of genes including ceh-10, ceh-23, kal-1, hen-1, ser-2, unc-17 and sra-11 in AIY neurons, and cat-4, flp-4, bas-1, ptps-1 and mgl-1 in NSM neurons. In concert with WNT/beta-catenin signaling, initiates expression of homeobox ceh-10 in AIY, but not in the sister cells, SMDD motor neurons. Also acts in an autoregulatory feedback loop to maintain its own expression. Plays a role in the thermotactic response, olfactory imprinting, regulation of longevity, control of dauer formation and axon outgrowth and pathfinding. Not required for normal chemosensory behavior. In Caenorhabditis elegans, this protein is LIM/homeobox protein ttx-3.